Here is a 548-residue protein sequence, read N- to C-terminus: Eukaryotic translation initiation factor 3 subunit D (548 aa).

Position 53 is an N6-acetyllysine (Lys-53). Ser-161 is subject to Phosphoserine. The interval 285–299 is RNA gate; that stretch reads DFDLLTVSETANEPP. The disordered stretch occupies residues 523 to 548; that stretch reads PDGTFSSDEDEEEEEEEEEEEEEEET. A phosphoserine mark is found at Ser-528 and Ser-529. Residues 529-548 are compositionally biased toward acidic residues; the sequence is SDEDEEEEEEEEEEEEEEET.

It belongs to the eIF-3 subunit D family. Component of the eukaryotic translation initiation factor 3 (eIF-3) complex, which is composed of 13 subunits: EIF3A, EIF3B, EIF3C, EIF3D, EIF3E, EIF3F, EIF3G, EIF3H, EIF3I, EIF3J, EIF3K, EIF3L and EIF3M. The eIF-3 complex appears to include 3 stable modules: module A is composed of EIF3A, EIF3B, EIF3G and EIF3I; module B is composed of EIF3F, EIF3H, and EIF3M; and module C is composed of EIF3C, EIF3D, EIF3E, EIF3K and EIF3L. EIF3C of module C binds EIF3B of module A and EIF3H of module B, thereby linking the three modules. EIF3J is a labile subunit that binds to the eIF-3 complex via EIF3B. The eIF-3 complex interacts with RPS6KB1 under conditions of nutrient depletion. Mitogenic stimulation leads to binding and activation of a complex composed of MTOR and RPTOR, leading to phosphorylation and release of RPS6KB1 and binding of EIF4B to eIF-3.

It is found in the cytoplasm. Its function is as follows. mRNA cap-binding component of the eukaryotic translation initiation factor 3 (eIF-3) complex, a complex required for several steps in the initiation of protein synthesis of a specialized repertoire of mRNAs. The eIF-3 complex associates with the 40S ribosome and facilitates the recruitment of eIF-1, eIF-1A, eIF-2:GTP:methionyl-tRNAi and eIF-5 to form the 43S pre-initiation complex (43S PIC). The eIF-3 complex stimulates mRNA recruitment to the 43S PIC and scanning of the mRNA for AUG recognition. The eIF-3 complex is also required for disassembly and recycling of post-termination ribosomal complexes and subsequently prevents premature joining of the 40S and 60S ribosomal subunits prior to initiation. The eIF-3 complex specifically targets and initiates translation of a subset of mRNAs involved in cell proliferation, including cell cycling, differentiation and apoptosis, and uses different modes of RNA stem-loop binding to exert either translational activation or repression. In the eIF-3 complex, EIF3D specifically recognizes and binds the 7-methylguanosine cap of a subset of mRNAs. This is Eukaryotic translation initiation factor 3 subunit D from Macaca fascicularis (Crab-eating macaque).